Consider the following 95-residue polypeptide: Complement inhibitor RaCI5 (95 aa).

The first 21 residues, 1-21 (MNAVIVLCVTISAVLIHQCYS), serve as a signal peptide directing secretion. Disulfide bonds link cysteine 35–cysteine 59, cysteine 40–cysteine 61, and cysteine 55–cysteine 76.

Belongs to the RaCI family. Expressed in salivary glands.

The protein resides in the secreted. Its function is as follows. Complement inhibitor. Prevents complement-mediated C5 activation by binding to C5. Binds C5 at a different binding site than the other tick complement inhibitors OmCI and CirpT1, and the drug eculizumab. In Rhipicephalus appendiculatus (Brown ear tick), this protein is Complement inhibitor RaCI5.